The chain runs to 144 residues: Large ribosomal subunit protein uL13 (144 aa).

It belongs to the universal ribosomal protein uL13 family. As to quaternary structure, part of the 50S ribosomal subunit.

In terms of biological role, this protein is one of the early assembly proteins of the 50S ribosomal subunit, although it is not seen to bind rRNA by itself. It is important during the early stages of 50S assembly. The polypeptide is Large ribosomal subunit protein uL13 (Clostridium botulinum (strain Alaska E43 / Type E3)).